The primary structure comprises 731 residues: 1,4-alpha-glucan branching enzyme GlgB (731 aa).

Asp-411 serves as the catalytic Nucleophile. Glu-464 (proton donor) is an active-site residue.

This sequence belongs to the glycosyl hydrolase 13 family. GlgB subfamily. In terms of assembly, monomer.

The enzyme catalyses Transfers a segment of a (1-&gt;4)-alpha-D-glucan chain to a primary hydroxy group in a similar glucan chain.. It functions in the pathway glycan biosynthesis; glycogen biosynthesis. Functionally, catalyzes the formation of the alpha-1,6-glucosidic linkages in glycogen by scission of a 1,4-alpha-linked oligosaccharide from growing alpha-1,4-glucan chains and the subsequent attachment of the oligosaccharide to the alpha-1,6 position. The protein is 1,4-alpha-glucan branching enzyme GlgB of Mycolicibacterium paratuberculosis (strain ATCC BAA-968 / K-10) (Mycobacterium paratuberculosis).